A 270-amino-acid chain; its full sequence is Cell surface glycoprotein CD200 receptor 5 (270 aa).

The signal sequence occupies residues methionine 1 to cysteine 25. Residues threonine 26–threonine 241 lie on the Extracellular side of the membrane. An Ig-like V-type domain is found at proline 39–glutamine 145. Asparagine 44 carries N-linked (GlcNAc...) asparagine glycosylation. 2 disulfides stabilise this stretch: cysteine 59/cysteine 129 and cysteine 164/cysteine 213. An Ig-like C2-type domain is found at proline 134–asparagine 229. Asparagine 192 and asparagine 221 each carry an N-linked (GlcNAc...) asparagine glycan. Residues isoleucine 242–phenylalanine 262 form a helical membrane-spanning segment. Over glutamine 263 to threonine 270 the chain is Cytoplasmic.

The protein belongs to the CD200R family.

It is found in the membrane. In terms of biological role, may not be a receptor for the CD200/OX2 cell surface glycoprotein. The chain is Cell surface glycoprotein CD200 receptor 5 (Cd200r5) from Mus musculus (Mouse).